A 346-amino-acid polypeptide reads, in one-letter code: Insertion element IS476 uncharacterized 39.2 kDa protein (346 aa).

The segment at 1–50 (MVSARPAFISGGPSTGGWRPTRQAAERTGGPEHSIEEVAGRGAPGHRSAE) is disordered. A compositionally biased stretch (basic and acidic residues) spans 29–39 (GGPEHSIEEVA). The Integrase catalytic domain maps to 169–329 (ASSMPNDTWS…IPPAQFAANY (161 aa)).

This is Insertion element IS476 uncharacterized 39.2 kDa protein from Xanthomonas euvesicatoria.